The sequence spans 538 residues: DALR anticodon-binding domain-containing protein 3 (538 aa).

Part of a complex containing tRNA(Arg) and METTL2. Interacts with tRNA(Arg)(CCU) and tRNA(Arg)(UCU). Interacts with METTL2.

Its function is as follows. Involved in tRNA methylation. Facilitates the recognition and targeting of tRNA(Arg)(CCU) and tRNA(Arg)(UCU) substrates for N(3)-methylcytidine modification by METTL2. The protein is DALR anticodon-binding domain-containing protein 3 (Dalrd3) of Mus musculus (Mouse).